Reading from the N-terminus, the 442-residue chain is Putative helicase 161L (442 aa).

Residues 88–241 (IDILEKNHSV…LFPIFFGKEK (154 aa)) enclose the Helicase ATP-binding domain. 101–108 (CFTGFGKT) serves as a coordination point for ATP. Positions 194–197 (DEVH) match the DEAH box motif.

Belongs to the DEAD box helicase family. DEAH subfamily.

The sequence is that of Putative helicase 161L from Invertebrate iridescent virus 6 (IIV-6).